The chain runs to 102 residues: MFVKTGDKVRVIAGKDKGKEGTITKTVAGKDRVVVEGVNIVKKHQKPSNEYPQGGVIDIEAPIHVSNVQLLDPSTNEPTKVAFKIEDGKKVRVSKKSGNVLG.

This sequence belongs to the universal ribosomal protein uL24 family. As to quaternary structure, part of the 50S ribosomal subunit.

In terms of biological role, one of two assembly initiator proteins, it binds directly to the 5'-end of the 23S rRNA, where it nucleates assembly of the 50S subunit. Its function is as follows. One of the proteins that surrounds the polypeptide exit tunnel on the outside of the subunit. The polypeptide is Large ribosomal subunit protein uL24 (Leuconostoc citreum (strain KM20)).